The following is a 406-amino-acid chain: Tyrosine--tRNA ligase (406 aa).

Tyr35 is an L-tyrosine binding site. A 'HIGH' region motif is present at residues 40–49 (PTADSLHVGH). L-tyrosine-binding residues include Tyr168 and Gln172. The short motif at 228-232 (KMGKT) is the 'KMSKS' region element. Lys231 is a binding site for ATP. One can recognise an S4 RNA-binding domain in the interval 340–404 (LPILDVMAST…RGKKNYNKIE (65 aa)).

It belongs to the class-I aminoacyl-tRNA synthetase family. TyrS type 1 subfamily. As to quaternary structure, homodimer.

The protein resides in the cytoplasm. The enzyme catalyses tRNA(Tyr) + L-tyrosine + ATP = L-tyrosyl-tRNA(Tyr) + AMP + diphosphate + H(+). Its function is as follows. Catalyzes the attachment of tyrosine to tRNA(Tyr) in a two-step reaction: tyrosine is first activated by ATP to form Tyr-AMP and then transferred to the acceptor end of tRNA(Tyr). This is Tyrosine--tRNA ligase from Clostridium beijerinckii (strain ATCC 51743 / NCIMB 8052) (Clostridium acetobutylicum).